A 377-amino-acid polypeptide reads, in one-letter code: Probable protein phosphatase 2C 7 (377 aa).

Disordered stretches follow at residues 1–68 (MAAH…GKAA) and 80–99 (TTVA…EDDE). Residues 21-39 (PPAAEAEAAAAAAAIARAA) are compositionally biased toward low complexity. A compositionally biased stretch (basic residues) spans 51–63 (GVRHPLKHRRFRA). Low complexity predominate over residues 80 to 89 (TTVAEATATG). The region spanning 115–361 (SCGYSSFRGR…DNITCIVVKF (247 aa)) is the PPM-type phosphatase domain. Mn(2+)-binding residues include Asp151, Gly152, Asp313, and Asp352.

Belongs to the PP2C family. The cofactor is Mg(2+). Requires Mn(2+) as cofactor.

It catalyses the reaction O-phospho-L-seryl-[protein] + H2O = L-seryl-[protein] + phosphate. The enzyme catalyses O-phospho-L-threonyl-[protein] + H2O = L-threonyl-[protein] + phosphate. This is Probable protein phosphatase 2C 7 from Oryza sativa subsp. japonica (Rice).